A 642-amino-acid polypeptide reads, in one-letter code: Sterol O-acyltransferase 2 (642 aa).

The interval lysine 174–valine 194 is disordered. 2 positions are modified to phosphoserine: serine 175 and serine 176. 5 helical membrane-spanning segments follow: residues phenylalanine 215 to isoleucine 235, threonine 292 to threonine 312, isoleucine 404 to tyrosine 424, isoleucine 442 to methionine 462, and leucine 485 to tryptophan 505. An FYXDWWN motif motif is present at residues phenylalanine 523–asparagine 529. The next 2 membrane-spanning stretches (helical) occupy residues alanine 567–phenylalanine 587 and valine 622–phenylalanine 642. The active site involves histidine 579.

It belongs to the membrane-bound acyltransferase family. Sterol o-acyltransferase subfamily.

It is found in the endoplasmic reticulum membrane. The catalysed reaction is ergosterol + an acyl-CoA = ergosteryl ester + CoA. It catalyses the reaction zymosterol + an acyl-CoA = zymosterol ester + CoA. Sterol O-acyltransferase that catalyzes the formation of stery esters. The protein is Sterol O-acyltransferase 2 of Saccharomyces cerevisiae (strain ATCC 204508 / S288c) (Baker's yeast).